The following is a 1298-amino-acid chain: DNA-directed RNA polymerase subunit beta' (1298 aa).

Cys-60, Cys-62, Cys-75, and Cys-78 together coordinate Zn(2+). Mg(2+) contacts are provided by Asp-535, Asp-537, and Asp-539. The Zn(2+) site is built by Cys-877, Cys-954, Cys-961, and Cys-964.

The protein belongs to the RNA polymerase beta' chain family. In terms of assembly, the RNAP catalytic core consists of 2 alpha, 1 beta, 1 beta' and 1 omega subunit. When a sigma factor is associated with the core the holoenzyme is formed, which can initiate transcription. The cofactor is Mg(2+). It depends on Zn(2+) as a cofactor.

It carries out the reaction RNA(n) + a ribonucleoside 5'-triphosphate = RNA(n+1) + diphosphate. Functionally, DNA-dependent RNA polymerase catalyzes the transcription of DNA into RNA using the four ribonucleoside triphosphates as substrates. The chain is DNA-directed RNA polymerase subunit beta' from Micrococcus luteus (strain ATCC 4698 / DSM 20030 / JCM 1464 / CCM 169 / CCUG 5858 / IAM 1056 / NBRC 3333 / NCIMB 9278 / NCTC 2665 / VKM Ac-2230) (Micrococcus lysodeikticus).